The following is a 174-amino-acid chain: Repair DNA polymerase X (174 aa).

The tract at residues 42-51 (REEKMLNDVD) is involved in ssDNA binding. 2 residues coordinate Mg(2+): Asp49 and Asp51. A disulfide bond links Cys81 and Cys86. Asp100 is a Mg(2+) binding site.

The protein belongs to the DNA polymerase type-X family. Mg(2+) is required as a cofactor.

It is found in the virion. It catalyses the reaction DNA(n) + a 2'-deoxyribonucleoside 5'-triphosphate = DNA(n+1) + diphosphate. Functionally, error-prone polymerase lacking a proofreading 3'-5' exonuclease which catalyzes the gap-filling reaction during the DNA repair process. Specifically binds intermediates in the single-nucleotide base-excision repair process. Also catalyzes DNA polymerization with low nucleotide-insertion fidelity. Probably acts as a strategic DNA mutase, which gives rise to a rapid emergence of variants. Generates mismatched G-G pairs, in that case, the polymerase first binds the deoxynucleotide followed by mismatch formation. Together with the viral DNA ligase, fills the single nucleotide gaps generated by the AP endonuclease. Binds DNA with high affinity via the helix alphaE. The protein is Repair DNA polymerase X of Ornithodoros (relapsing fever ticks).